A 725-amino-acid chain; its full sequence is 1,4-alpha-glucan branching enzyme GlgB (725 aa).

The active-site Nucleophile is Asp406. Catalysis depends on Glu459, which acts as the Proton donor.

The protein belongs to the glycosyl hydrolase 13 family. GlgB subfamily. In terms of assembly, monomer.

The enzyme catalyses Transfers a segment of a (1-&gt;4)-alpha-D-glucan chain to a primary hydroxy group in a similar glucan chain.. It participates in glycan biosynthesis; glycogen biosynthesis. Catalyzes the formation of the alpha-1,6-glucosidic linkages in glycogen by scission of a 1,4-alpha-linked oligosaccharide from growing alpha-1,4-glucan chains and the subsequent attachment of the oligosaccharide to the alpha-1,6 position. This is 1,4-alpha-glucan branching enzyme GlgB from Methylobacillus flagellatus (strain ATCC 51484 / DSM 6875 / VKM B-1610 / KT).